The primary structure comprises 707 residues: MPEEAGFPPAKRFRPGSGPPSRAGSFPPGRQVVMLLTAGSGGRGGGGGRRQQPPLAQPSASPYPEAVELQRRSLPIFQARGQLLAQLRNLDNAVLIGETGSGKTTQIPQYLYEGGISRQGIIAVTQPRRVAAISLATRVSDEKRTELGKLVGYTVRFDDVTSEDTRIKFLTDGMLLREAISDSLLRKYSCVILDEAHERTIHTDVLFGVVKAAQKRRKELGKLPLKVIVMSATMDVDLFSQYFNGAPVLYLEGRQHPIQVFYTKQPQNDYLHAALVSVFQIHQEAPSSQDILVFLTGQEEIEAMSKTCRDIAKHLPDGCPAMLVLPLYASLPYAQQLRVFQGAPKGYRKVIISTNIAETSITITGIKYVVDTGMVKAKKYNPDSGLEVLAVQRVSKTQAWQRTGRAGREDSGICYRLYTEDEFEKFDKMTVPEIQRCNLASVMLQLLAMKVPNVLTFDFMSKPSPDHIQAAIAQLDLLGALEHKDDQLTLTPMGRKMAAFPLEPKFAKTILMSPKFHCTEEILTIVSLLSVDSVLHNPPSRREEVQGVRKKFISSEGDHMTLLNIYRTFKNLGGNKDWCKENFVNSKNMTLVAEVRAQLRDICLKMSMPIASSRGDVESVRRCLAHSLFMSTAELQPDGTYATTDTHQPVAIHPSSVLFHCKPACVVYTELLYTNKCYMRDLCVIDAQWLYEAAPEYFRRKLRTARN.

Residues 1-64 (MPEEAGFPPA…LAQPSASPYP (64 aa)) form a disordered region. The required for nucleolar location stretch occupies residues 1–80 (MPEEAGFPPA…RRSLPIFQAR (80 aa)). Positions 39–49 (GSGGRGGGGGR) are enriched in gly residues. Residues 50 to 64 (RQQPPLAQPSASPYP) are compositionally biased toward low complexity. A Helicase ATP-binding domain is found at 84 to 252 (LAQLRNLDNA…FNGAPVLYLE (169 aa)). 97–104 (GETGSGKT) contributes to the ATP binding site. Residues 194-197 (DEAH) carry the DEAH box motif. The 174-residue stretch at 277–450 (SVFQIHQEAP…SVMLQLLAMK (174 aa)) folds into the Helicase C-terminal domain. The segment at 471–562 (AIAQLDLLGA…ISSEGDHMTL (92 aa)) is HA2; required for interaction with EIF3G and RPL26. The Critical for rDNA-binding signature appears at 547 to 558 (GVRKKFISSEGD).

Belongs to the DEAD box helicase family. DEAH subfamily. In terms of assembly, interacts with UBTF. Interacts with DDX3X, EIF3G and EIF3H; the interaction is independent of RNA. Interacts (via HA2 region and Helicase C-terminal domain) with the components of the large ribosomal subunit RPL3, RPL7, RPL26 and RPL27. Interacts (via DEAH box) with NLRP3 (via NACHT domain). Binds to mRNA. Binds to double-stranded RNA (via the helicase C-terminal domain). Interacts (via the helicase C-terminal domain) with MAVS. Post-translationally, ubiquitinated, leading to its degradation by the proteasome. Deubiquitinated by USP36.

The protein resides in the nucleus. It is found in the nucleolus. The protein localises to the nucleoplasm. It localises to the cytoplasm. Its subcellular location is the inflammasome. The enzyme catalyses ATP + H2O = ADP + phosphate + H(+). Implicated in nucleolar organization, ribosome biogenesis, protein synthesis and cytoplasmic dsRNA sensing. Stimulates RNA polymerase I transcription of the 47S precursor rRNA. Associates with ribosomal DNA (rDNA) loci where it is involved in POLR1A recruitment. In the cytoplasm, promotes elongation-competent 80S ribosome assembly at the late stage of mRNA translation initiation. Senses cytosolic dsRNA mediating NLRP3 inflammasome formation in macrophages and type I interferon production in myeloid dendritic cells. Required for NLRP3 activation induced by viral dsRNA and bacterial RNA. In dendritic cells, required for induction of type I interferon production induced by cytoplasmic dsRNA via the activation of MAPK and NF-kappa-B signaling pathways. This is ATP-dependent RNA helicase DHX33 from Homo sapiens (Human).